Reading from the N-terminus, the 291-residue chain is 4-hydroxy-tetrahydrodipicolinate synthase (291 aa).

Residue Thr44 participates in pyruvate binding. Tyr132 serves as the catalytic Proton donor/acceptor. Residue Lys160 is the Schiff-base intermediate with substrate of the active site. Pyruvate is bound at residue Ile202.

The protein belongs to the DapA family. Homotetramer; dimer of dimers.

Its subcellular location is the cytoplasm. The enzyme catalyses L-aspartate 4-semialdehyde + pyruvate = (2S,4S)-4-hydroxy-2,3,4,5-tetrahydrodipicolinate + H2O + H(+). The protein operates within amino-acid biosynthesis; L-lysine biosynthesis via DAP pathway; (S)-tetrahydrodipicolinate from L-aspartate: step 3/4. In terms of biological role, catalyzes the condensation of (S)-aspartate-beta-semialdehyde [(S)-ASA] and pyruvate to 4-hydroxy-tetrahydrodipicolinate (HTPA). In Zymomonas mobilis subsp. mobilis (strain ATCC 31821 / ZM4 / CP4), this protein is 4-hydroxy-tetrahydrodipicolinate synthase.